A 246-amino-acid chain; its full sequence is Small ribosomal subunit protein uS2 (246 aa).

The protein belongs to the universal ribosomal protein uS2 family.

This is Small ribosomal subunit protein uS2 from Lachnoclostridium phytofermentans (strain ATCC 700394 / DSM 18823 / ISDg) (Clostridium phytofermentans).